Consider the following 342-residue polypeptide: GTPase Obg (342 aa).

Residues 1–159 (MKFLDLCKVY…RTIWLRLKLI (159 aa)) enclose the Obg domain. The region spanning 160–327 (ADAGLLGLPN…VLRALWAEID (168 aa)) is the OBG-type G domain. GTP is bound by residues 166–173 (GLPNAGKS), 191–195 (FTTLV), 212–215 (DIPG), 279–282 (NKID), and 308–310 (SGV). Positions 173 and 193 each coordinate Mg(2+).

This sequence belongs to the TRAFAC class OBG-HflX-like GTPase superfamily. OBG GTPase family. Monomer. Requires Mg(2+) as cofactor.

The protein localises to the cytoplasm. An essential GTPase which binds GTP, GDP and possibly (p)ppGpp with moderate affinity, with high nucleotide exchange rates and a fairly low GTP hydrolysis rate. Plays a role in control of the cell cycle, stress response, ribosome biogenesis and in those bacteria that undergo differentiation, in morphogenesis control. The sequence is that of GTPase Obg from Cereibacter sphaeroides (strain ATCC 17025 / ATH 2.4.3) (Rhodobacter sphaeroides).